The sequence spans 1119 residues: DNA-directed RNA polymerase D subunit 2b (1119 aa).

Residue Asp-732 participates in Mg(2+) binding. The Zn(2+) site is built by Cys-1055, Cys-1058, Cys-1080, and Cys-1083. The C4-type zinc finger occupies 1055–1083 (CRKCKTYANVIERTPSSGRKIRGPYCRVC).

The protein belongs to the RNA polymerase beta chain family. Component of the RNA polymerase IVa and IVb (Pol IV) complexes.

Its subcellular location is the nucleus. It carries out the reaction RNA(n) + a ribonucleoside 5'-triphosphate = RNA(n+1) + diphosphate. DNA-dependent RNA polymerase catalyzes the transcription of DNA into RNA using the four ribonucleoside triphosphates as substrates. Second largest component of RNA polymerase IVa and IVb which mediate short-interfering RNAs (siRNA) accumulation and subsequent RNA-directed DNA methylation-dependent (RdDM) silencing of endogenous repeated sequences, including transposable largest subunit. Also required for full erasure of methylation elements. Required for intercellular RNA interference (RNAi) leading to systemic post-transcriptional gene silencing. The protein is DNA-directed RNA polymerase D subunit 2b (NRPD2b) of Arabidopsis thaliana (Mouse-ear cress).